The sequence spans 102 residues: 10 kDa heat shock protein, mitochondrial (102 aa).

Residue Ala2 is modified to N-acetylalanine. Lys8 is subject to N6-acetyllysine. Lys28 carries the post-translational modification N6-succinyllysine. Lys40 is modified (N6-acetyllysine; alternate). N6-malonyllysine; alternate occurs at positions 40, 54, and 56. 5 positions are modified to N6-succinyllysine; alternate: Lys40, Lys54, Lys56, Lys66, and Lys70. Lys56, Lys66, and Lys70 each carry N6-acetyllysine; alternate. Thr79 carries the post-translational modification Phosphothreonine. N6-acetyllysine; alternate occurs at positions 80 and 86. Lys80 and Lys86 each carry N6-succinyllysine; alternate. Lys99 is modified (N6-acetyllysine).

The protein belongs to the GroES chaperonin family. Homoheptamer arranged in a ring structure. 2 heptameric Hsp10 rings interact with a Hsp60 tetradecamer in the structure of a back-to-back double heptameric ring to form the symmetrical football complex.

The protein resides in the mitochondrion matrix. Functionally, co-chaperonin implicated in mitochondrial protein import and macromolecular assembly. Together with Hsp60, facilitates the correct folding of imported proteins. May also prevent misfolding and promote the refolding and proper assembly of unfolded polypeptides generated under stress conditions in the mitochondrial matrix. The functional units of these chaperonins consist of heptameric rings of the large subunit Hsp60, which function as a back-to-back double ring. In a cyclic reaction, Hsp60 ring complexes bind one unfolded substrate protein per ring, followed by the binding of ATP and association with 2 heptameric rings of the co-chaperonin Hsp10. This leads to sequestration of the substrate protein in the inner cavity of Hsp60 where, for a certain period of time, it can fold undisturbed by other cell components. Synchronous hydrolysis of ATP in all Hsp60 subunits results in the dissociation of the chaperonin rings and the release of ADP and the folded substrate protein. The sequence is that of 10 kDa heat shock protein, mitochondrial (Hspe1) from Rattus norvegicus (Rat).